The sequence spans 101 residues: Protein RnfH (101 aa).

It belongs to the UPF0125 (RnfH) family.

The chain is Protein RnfH from Pseudomonas aeruginosa (strain LESB58).